A 372-amino-acid chain; its full sequence is Adaptive-response sensory kinase SasA (372 aa).

Residues 147–360 (MVAHELRTPL…CFHFTVPVWQ (214 aa)) enclose the Histidine kinase domain. Histidine 150 is modified (phosphohistidine; by autocatalysis).

In terms of assembly, homooligomerizes. Interacts with KaiC. Participates in the KaiBC complex, whose core is composed of a KaiC homohexamer and 6 KaiB.

The catalysed reaction is ATP + protein L-histidine = ADP + protein N-phospho-L-histidine.. Its function is as follows. Member of the two-component regulatory system SasA/RpaA involved in genome-wide circadian gene expression. One of several clock output pathways. Participates in the Kai clock protein complex, the main circadian regulator in cyanobacteria, via its interaction with KaiC. KaiC enhances the autophosphorylation activity of SasA, which then transfers its phosphate group to RpaA to activate it. In addition to its output function, recruits fold-shifted KaiB (KaiB(fs)) to KaiC to cooperatively form the KaiB(6):KaiC(6) complex (independent of SasA kinase activity). Required for robustness of the circadian rhythm of gene expression and is involved in clock output, also required for adaptation to light/dark cycles. The sequence is that of Adaptive-response sensory kinase SasA from Prochlorococcus marinus (strain MIT 9301).